The following is a 209-amino-acid chain: Mitochondrial import inner membrane translocase subunit Tim23 (209 aa).

3 consecutive transmembrane segments (helical) span residues 73-93 (FELA…FGAM), 125-145 (ALWA…GVII), and 172-194 (GGLR…YALY).

Belongs to the Tim17/Tim22/Tim23 family. In terms of assembly, component of the TIM23 complex at least composed of TIMM23, TIMM17 (TIMM17A or TIMM17B) and TIMM50; within this complex, directly interacts with TIMM50. The complex interacts with the TIMM44 component of the PAM complex and with DNAJC15. Upon mitochondrial depolarization, interacts with PINK1; the interaction is required for PINK1 accumulation at the outer mitochondrial membrane, kinase activation by autophosphorylation and PRKN recruitement to mitochondria.

It localises to the mitochondrion inner membrane. Its function is as follows. Essential component of the TIM23 complex, a complex that mediates the translocation of transit peptide-containing proteins across the mitochondrial inner membrane. Has a role in the activation of stress-induced mitophagy by protecting PINK1 from OMA1-mediated degradation and facilitating its accumulation at the outer mitochondrial membrane in response to depolarization. This is Mitochondrial import inner membrane translocase subunit Tim23 (TIMM23) from Pongo abelii (Sumatran orangutan).